The primary structure comprises 346 residues: Transcription termination factor 4, mitochondrial (346 aa).

A mitochondrion-targeting transit peptide spans 1 to 42 (MASLGRQVPEWHRLLALSWACLVRQTPHLREQKQMSPSLSCK). 5 MTERF repeats span residues 142–172 (FNAL…LGLG), 177–204 (KRVL…LREK), 209–239 (AQHI…YAYF), 245–270 (HLDI…YLER), and 290–318 (LRNI…VFKK). Residues 310–327 (VEEFQVFKKLLDQEEEEE) are dimerization with NSUN4. The interval 321 to 346 (DQEEEEESESHASEEEEEEEEEEELL) is disordered. Residues 322–346 (QEEEEESESHASEEEEEEEEEEELL) are compositionally biased toward acidic residues.

Belongs to the mTERF family. Heterodimer with NSUN4; this interaction may be required for NSUN4 recruitment to the mitochondrial large ribosomal subunit. As to expression, widely expressed, with highest levels in liver, followed by testis, kidney and brain.

The protein resides in the mitochondrion. Regulator of mitochondrial ribosome biogenesis and translation. Binds to mitochondrial ribosomal RNAs 16S, 12S and 7S. Targets NSUN4 RNA methyltransferase to the mitochondrial large ribosomal subunit. The protein is Transcription termination factor 4, mitochondrial (Mterf4) of Mus musculus (Mouse).